The primary structure comprises 51 residues: Insulin (51 aa).

Disulfide bonds link C7–C37, C19–C50, and C36–C41.

It belongs to the insulin family. As to quaternary structure, heterodimer of a B chain and an A chain linked by two disulfide bonds.

The protein localises to the secreted. Insulin decreases blood glucose concentration. It increases cell permeability to monosaccharides, amino acids and fatty acids. It accelerates glycolysis, the pentose phosphate cycle, and glycogen synthesis in liver. The sequence is that of Insulin (INS) from Balaenoptera borealis (Sei whale).